The primary structure comprises 622 residues: Apical membrane antigen 1 (622 aa).

Residues 1-24 form the signal peptide; sequence MRKLYCVLLLSAFEFTYMINFGRG. Residues 25 to 546 lie on the Extracellular side of the membrane; it reads QNYWEHPYQK…EHKPTYDKMK (522 aa). 5 disulfides stabilise this stretch: cysteine 149/cysteine 302, cysteine 217/cysteine 247, cysteine 263/cysteine 275, cysteine 320/cysteine 418, and cysteine 337/cysteine 409. N-linked (GlcNAc...) asparagine glycosylation is present at asparagine 162. Asparagine 286, asparagine 371, asparagine 421, asparagine 422, and asparagine 499 each carry an N-linked (GlcNAc...) asparagine glycan. Disulfide bonds link cysteine 443–cysteine 502, cysteine 490–cysteine 507, and cysteine 492–cysteine 509. The helical transmembrane segment at 547 to 567 threads the bilayer; sequence IIIASSAAVAVLATILMVYLY. The Cytoplasmic portion of the chain corresponds to 568–622; it reads KRKGNAEKYDKMDEPQHYGKSNSRNDEMLDPEASFWGEEKRASHTTPVLMEKPYY. A compositionally biased stretch (basic and acidic residues) spans 578–594; that stretch reads KMDEPQHYGKSNSRNDE. The interval 578-607 is disordered; it reads KMDEPQHYGKSNSRNDEMLDPEASFWGEEK.

Belongs to the apicomplexan parasites AMA1 family.

It localises to the membrane. Its function is as follows. Involved in parasite invasion of erythrocytes. This Plasmodium falciparum (isolate FC27 / Papua New Guinea) protein is Apical membrane antigen 1 (AMA-1).